The following is a 339-amino-acid chain: Phenylalanine--tRNA ligase alpha subunit (339 aa).

E254 contacts Mg(2+).

The protein belongs to the class-II aminoacyl-tRNA synthetase family. Phe-tRNA synthetase alpha subunit type 1 subfamily. As to quaternary structure, tetramer of two alpha and two beta subunits. Requires Mg(2+) as cofactor.

The protein localises to the cytoplasm. It catalyses the reaction tRNA(Phe) + L-phenylalanine + ATP = L-phenylalanyl-tRNA(Phe) + AMP + diphosphate + H(+). This Clostridium botulinum (strain ATCC 19397 / Type A) protein is Phenylalanine--tRNA ligase alpha subunit.